Reading from the N-terminus, the 162-residue chain is Phosphopantetheine adenylyltransferase (162 aa).

Residue serine 11 coordinates substrate. Residues serine 11 to phenylalanine 12 and histidine 19 each bind ATP. Residues lysine 43, valine 76, and arginine 90 each contribute to the substrate site. Residues glycine 91–arginine 93, glutamate 101, and histidine 126–serine 132 each bind ATP.

This sequence belongs to the bacterial CoaD family. Homohexamer. It depends on Mg(2+) as a cofactor.

It localises to the cytoplasm. It carries out the reaction (R)-4'-phosphopantetheine + ATP + H(+) = 3'-dephospho-CoA + diphosphate. Its pathway is cofactor biosynthesis; coenzyme A biosynthesis; CoA from (R)-pantothenate: step 4/5. In terms of biological role, reversibly transfers an adenylyl group from ATP to 4'-phosphopantetheine, yielding dephospho-CoA (dPCoA) and pyrophosphate. This is Phosphopantetheine adenylyltransferase from Streptococcus pneumoniae (strain ATCC 700669 / Spain 23F-1).